Reading from the N-terminus, the 187-residue chain is Large ribosomal subunit protein uL24c (187 aa).

Residues 1 to 41 constitute a chloroplast transit peptide; the sequence is MAALQSSFAGLSTSFFGQRFSPPLSLPPLVKSTEGPCLIQA.

Belongs to the universal ribosomal protein uL24 family. Part of the 50S ribosomal subunit.

Its subcellular location is the plastid. The protein localises to the chloroplast. Its function is as follows. One of two assembly initiator proteins, it binds directly to the 5'-end of the 23S rRNA, where it nucleates assembly of the 50S subunit. The protein is Large ribosomal subunit protein uL24c (RPL24) of Nicotiana tabacum (Common tobacco).